The following is a 66-amino-acid chain: MGQKTALGTLLKAIGNSGQGKVVPGWGAVPIMTVIGLLLLVFLVILLQIYNQSLLLQGFSVDWNGN.

A helical transmembrane segment spans residues 27 to 47 (GAVPIMTVIGLLLLVFLVILL).

This sequence belongs to the PsbH family. In terms of assembly, PSII is composed of 1 copy each of membrane proteins PsbA, PsbB, PsbC, PsbD, PsbE, PsbF, PsbH, PsbI, PsbJ, PsbK, PsbL, PsbM, PsbT, PsbX, PsbY, Psb30/Ycf12, peripheral proteins PsbO, CyanoQ (PsbQ), PsbU, PsbV and a large number of cofactors. It forms dimeric complexes.

The protein resides in the cellular thylakoid membrane. One of the components of the core complex of photosystem II (PSII), required for its stability and/or assembly. PSII is a light-driven water:plastoquinone oxidoreductase that uses light energy to abstract electrons from H(2)O, generating O(2) and a proton gradient subsequently used for ATP formation. It consists of a core antenna complex that captures photons, and an electron transfer chain that converts photonic excitation into a charge separation. This is Photosystem II reaction center protein H from Prochlorococcus marinus (strain MIT 9515).